The following is a 419-amino-acid chain: Double-stranded RNA-binding protein 1 (419 aa).

2 DRBM domains span residues 15 to 84 and 101 to 170; these read VFKS…ELAK and LCKN…AIQS. The short motif at 207–222 is the Bipartite nuclear localization element; it reads KARKAQFKKKAQKGKR. 6 tandem repeats follow at residues 247–274, 275–302, 303–330, 331–358, 359–386, and 387–414. The 6 X 28 AA repeats of E-K-I-E-T-T-P-N-L-E-[PS]-[PS]-S-C-M-[NS]-G-L-K-E-A-A-F-G-S-V-E-T stretch occupies residues 247–414; the sequence is EKIETTPNLE…KEAAFGSVET (168 aa).

Homodimer. Heterodimer with DRB2, DRB4 or DRB5. Interacts with SE and DCL1. Interacts with RCF3, RS40 and RS41. Expressed in rosette and cauline leaves, stems, roots, flowers and siliques.

The protein resides in the nucleus. Its subcellular location is the nucleus speckle. Double-stranded RNA-binding protein involved in RNA-mediated post-transcriptional gene silencing (PTGS). Functions in the microRNAs (miRNAs) biogenesis by assisting DICER-LIKE 1 (DCL1) in the accurate processing from primary miRNAs (pri-miRNAs) to miRNAs in the nucleus. Forms a complex with SERRATE (SE) and DCL1 to promote accurate processing of pri-miRNAs by DCL1. Binds and assist DCL1 for accurate processing of precursor miRNAs (pre-miRNA). Indirectly involved in the production of trans-acting small interfering RNAs (ta-siRNAs) derived from the TAS1, TAS2 or TAS3 endogenous transcripts by participating in the production of their initiating miRNAs. Involved with argonaute 1 (AGO1) in the guide strand selection from miRNA duplexes, presumably by directional loading of the miRNA duplex (guide stand and passenger strand) onto the RNA-induced silencing complex (RISC) for passenger strand degradation. Does not participate in sense transgene-induced post-transcriptional gene silencing (S-PTGS). Involved in several plant development aspects and response to hormones through its role in miRNAs processing. In Arabidopsis thaliana (Mouse-ear cress), this protein is Double-stranded RNA-binding protein 1 (DRB1).